The chain runs to 451 residues: Trigger factor (451 aa).

In terms of domain architecture, PPIase FKBP-type spans 173-258; that stretch reads GDRVTVDFVG…LKKVEWAHLP (86 aa).

It belongs to the FKBP-type PPIase family. Tig subfamily.

The protein resides in the cytoplasm. It carries out the reaction [protein]-peptidylproline (omega=180) = [protein]-peptidylproline (omega=0). Involved in protein export. Acts as a chaperone by maintaining the newly synthesized protein in an open conformation. Functions as a peptidyl-prolyl cis-trans isomerase. The chain is Trigger factor from Cupriavidus taiwanensis (strain DSM 17343 / BCRC 17206 / CCUG 44338 / CIP 107171 / LMG 19424 / R1) (Ralstonia taiwanensis (strain LMG 19424)).